The primary structure comprises 457 residues: MDCDICHRSHDAKRLPFLCTVDARAALYDGRIENVMALIENEDLQKQISDLLDETNAPTKDRKDALQAQQRTAEDRTTQILAAADKLRNDIKAAKEEIQTRRAALSRRKSDIAAVSDGLIERRVKRQKSVERETGMHKYRWTKCADELARTRSFLCIEAAQLYGLKRIKEGSPSKYEYYLGGIPVVDLTAMNSSTPEMISTSLSHICQILILVSHYLSIRLPAAITLPHRDYPRPTIFNLSASYRPGDPVFPSQASVSSPSSTTDTESQRVSRPRPLFIDKPLSQLAKEDPATFSYFIEGVTLLAYNIAWACNTQGVSIGDKALFEDMSNMGRNLYNLLINHQSAGKDPDTLKNEADGQTSRFGQYSHGTTFYHLGGAEGTEFSKTFKLPSPMKLADKLKKKLLSEAPTPDWEVLDDDAWKVEEELADGSQVNKNLLMGDKSSPRRGTSGWMRVKNR.

Residues 31-109 adopt a coiled-coil conformation; it reads RIENVMALIE…TRRAALSRRK (79 aa). 3 disordered regions span residues 54–73, 252–274, and 433–457; these read ETNAPTKDRKDALQAQQRTA, PSQASVSSPSSTTDTESQRVSRP, and NKNLLMGDKSSPRRGTSGWMRVKNR. The span at 253–266 shows a compositional bias: low complexity; it reads SQASVSSPSSTTDT.

It belongs to the ATG14 family. As to quaternary structure, component of the autophagy-specific VPS34 PI3-kinase complex I.

It is found in the preautophagosomal structure membrane. The protein resides in the vacuole membrane. Functionally, required for cytoplasm to vacuole transport (Cvt) and autophagy as a part of the autophagy-specific VPS34 PI3-kinase complex I. This complex is essential to recruit the ATG8-phosphatidylinositol conjugate and the ATG12-ATG5 conjugate to the pre-autophagosomal structure. ATG14 mediates the specific binding of the VPS34 PI3-kinase complex I to the preautophagosomal structure (PAS). Autophagy is required for proper vegetative growth, asexual/sexual reproduction, and full virulence. Autophagy is particularly involved in the biosynthesis of deoxynivalenol (DON), an important virulence determinant. This is Autophagy-related protein 14 from Gibberella zeae (strain ATCC MYA-4620 / CBS 123657 / FGSC 9075 / NRRL 31084 / PH-1) (Wheat head blight fungus).